Reading from the N-terminus, the 296-residue chain is GTP-binding protein GEM (296 aa).

2 disordered regions span residues 1–20 and 37–68; these read MTLN…PQQQ and PHQY…SVIS. A compositionally biased stretch (low complexity) spans 57 to 68; that stretch reads SWSSDSTDSVIS. Residues 82–89 and 191–194 each bind GTP; these read GEQGVGKS and NKSD. The calmodulin-binding stretch occupies residues 266-285; that stretch reads ARRFWGKIVAKNNKNMAFKL.

The protein belongs to the small GTPase superfamily. RGK family. As to quaternary structure, interacts with calmodulin in a Ca(2+)-dependent manner. Binds ROCK1. In terms of processing, phosphorylated on tyrosine residues. Most abundant in thymus, spleen, kidney, lung, and testis. Less abundant in heart, brain, liver and skeletal muscle.

The protein localises to the cell membrane. Could be a regulatory protein, possibly participating in receptor-mediated signal transduction at the plasma membrane. Has guanine nucleotide-binding activity but undetectable intrinsic GTPase activity. The polypeptide is GTP-binding protein GEM (GEM) (Homo sapiens (Human)).